The sequence spans 127 residues: Probable 4-amino-4-deoxy-L-arabinose-phosphoundecaprenol flippase subunit ArnF (127 aa).

Over 1-2 (MG) the chain is Cytoplasmic. A helical membrane pass occupies residues 3-23 (LLFALGSVVLVSAAQLLLKWA). Residues 24 to 47 (MIQLPDISQLPQFLSSLSQFPLPT) lie on the Periplasmic side of the membrane. A helical transmembrane segment spans residues 48-68 (AALFLGLLAYALSMLCWLLAL). Residues 69 to 76 (KRLPLSRA) lie on the Cytoplasmic side of the membrane. A helical membrane pass occupies residues 77–97 (YPLLSLSYLLVWLAALWLPGL). Topologically, residues 98–102 (NEVFR) are periplasmic. The chain crosses the membrane as a helical span at residues 103–123 (WGKLAGAGLIVSGLLLICWPA). Residues 124–127 (AKTR) lie on the Cytoplasmic side of the membrane.

It belongs to the ArnF family. Heterodimer of ArnE and ArnF.

It is found in the cell inner membrane. The protein operates within bacterial outer membrane biogenesis; lipopolysaccharide biosynthesis. Functionally, translocates 4-amino-4-deoxy-L-arabinose-phosphoundecaprenol (alpha-L-Ara4N-phosphoundecaprenol) from the cytoplasmic to the periplasmic side of the inner membrane. This chain is Probable 4-amino-4-deoxy-L-arabinose-phosphoundecaprenol flippase subunit ArnF, found in Erwinia tasmaniensis (strain DSM 17950 / CFBP 7177 / CIP 109463 / NCPPB 4357 / Et1/99).